A 331-amino-acid chain; its full sequence is Glycerophosphodiester phosphodiesterase 1 (331 aa).

The Cytoplasmic segment spans residues 1 to 2 (MW). Residues 3-23 (LWEEQGGLMGPFSFLLLVLLL) form a helical membrane-spanning segment. The Lumenal portion of the chain corresponds to 24–254 (LTRSPFNACL…WKQSMFVALD (231 aa)). The region spanning 65–331 (VSAIAHRGGS…SMLEDCTPEF (267 aa)) is the GP-PDE domain. Positions 97 and 99 each coordinate Mg(2+). Asn-168 is a glycosylation site (N-linked (GlcNAc...) asparagine). Asp-174 is a Mg(2+) binding site. An N-linked (GlcNAc...) asparagine glycan is attached at Asn-198. The helical transmembrane segment at 255-275 (ILLDWSMHNILWYLCGVSAFL) threads the bilayer. Residues 276–331 (AQKDFISPDYVKKWSAKGIQVVAWTVNTFDEKSYYESHLGSSYITDSMLEDCTPEF) are Cytoplasmic-facing.

It belongs to the glycerophosphoryl diester phosphodiesterase family. In terms of assembly, interacts with PRAF2. Interacts with RGS16. The cofactor is Mg(2+). N-glycosylated.

It localises to the cell membrane. It is found in the cytoplasmic vesicle membrane. It catalyses the reaction sn-glycero-3-phospho-1D-myo-inositol + H2O = myo-inositol + sn-glycerol 3-phosphate + H(+). The catalysed reaction is 1-O-(1Z-octadecenyl)-sn-glycero-3-phospho-(N-5Z,8Z,11Z,14Z-eicosatetraenoyl)-ethanolamine + H2O = 1-O-(1Z-octadecenyl)-sn-glycero-3-phosphate + N-(5Z,8Z,11Z,14Z-eicosatetraenoyl)-ethanolamine + H(+). The enzyme catalyses 1-O-(1Z-octadecenyl)-sn-glycero-3-phospho-(N-9Z-octadecenoyl)-ethanolamine + H2O = 1-O-(1Z-octadecenyl)-sn-glycero-3-phosphate + N-(9Z-octadecenoyl) ethanolamine + H(+). It carries out the reaction 1-O-(1Z-octadecenyl)-sn-glycero-3-phospho-N-hexadecanoyl-ethanolamine + H2O = 1-O-(1Z-octadecenyl)-sn-glycero-3-phosphate + N-hexadecanoylethanolamine + H(+). It catalyses the reaction N-(4Z,7Z,10Z,13Z,16Z,19Z)-docosahexaenoyl-sn-glycero-3-phosphoethanolamine + H2O = N-(4Z,7Z,10Z,13Z,16Z,19Z)-docosahexaenoyl ethanolamine + sn-glycerol 3-phosphate + H(+). The catalysed reaction is N-eicosanoyl-sn-glycero-3-phosphoethanolamine + H2O = N-eicosanoyl ethanolamine + sn-glycerol 3-phosphate + H(+). The enzyme catalyses N-hexadecanoyl-sn-glycero-3-phosphoethanolamine + H2O = N-hexadecanoylethanolamine + sn-glycerol 3-phosphate + H(+). It carries out the reaction N-(9Z-octadecenoyl)-sn-glycero-3-phosphoethanolamine + H2O = N-(9Z-octadecenoyl) ethanolamine + sn-glycerol 3-phosphate + H(+). It catalyses the reaction N-(5Z,8Z,11Z,14Z-eicosatetraenoyl)-sn-glycero-3-phosphoethanolamine + H2O = N-(5Z,8Z,11Z,14Z-eicosatetraenoyl)-ethanolamine + sn-glycerol 3-phosphate + H(+). Its activity is regulated as follows. Inhibited by EDTA, calcium chloride, and zinc chloride. Enhanced by magnesium chloride. Glycerophosphodiester phosphodiesterase activity can be modulated by G-protein signaling pathways. Its function is as follows. Hydrolyzes the phosphodiester bond of glycerophosphodiesters such as glycerophosphoinositol (GroPIns) and glycerophosphoethanolamine (GroPEth), to yield a glycerol phosphate and an alcohol. Hydrolyzes glycerophospho-N-acylethanolamines to N-acylethanolamines in the brain and participates in bioactive N-acylethanolamine biosynthesis such as anandamide (an endocannabinoid), N-palmitoylethanolamine (an anti-inflammatory), and N-oleoylethanolamine (an anorexic). In addition, has a lysophospholipase D activity by hydrolyzing N-acyl-lysoplasmenylethanolamine (N-acyl-lysoPlsEt) to N-acylethanolamine. However lysophospholipase D activity is lower than glycerophosphodiester phosphodiesterase activity. Has little or no activity towards glycerophosphocholine. The polypeptide is Glycerophosphodiester phosphodiesterase 1 (Bos taurus (Bovine)).